Consider the following 538-residue polypeptide: Sensor protein CitS (538 aa).

The Cytoplasmic segment spans residues 1–13 (MKRRLFPLTFSAK). The chain crosses the membrane as a helical span at residues 14-34 (MMGFIALLIIAMFVLLGVFLN). Over 35 to 174 (EQYARTLEEQ…DIQQVIGERL (140 aa)) the chain is Extracellular. Residues 175–195 (IAMWQIVVVIMILGLMGTWLV) traverse the membrane as a helical segment. Over 196-538 (ANTVKKATLG…TIPKHEAKEG (343 aa)) the chain is Cytoplasmic. Residues 216–282 (QQKEAILQSI…PEVLQVGKGQ (67 aa)) enclose the PAS domain. In terms of domain architecture, Histidine kinase spans 339–534 (AQTHEFSNKL…CFVLTIPKHE (196 aa)). Phosphohistidine; by autocatalysis is present on His-342.

The protein localises to the cell membrane. The enzyme catalyses ATP + protein L-histidine = ADP + protein N-phospho-L-histidine.. Member of the two-component regulatory system CitT/CitS. Functions probably as a membrane-associated protein kinase that phosphorylates CitT in response to environmental citrate or Mg(2+)-citrate complex. In Halalkalibacterium halodurans (strain ATCC BAA-125 / DSM 18197 / FERM 7344 / JCM 9153 / C-125) (Bacillus halodurans), this protein is Sensor protein CitS (citS).